Here is a 59-residue protein sequence, read N- to C-terminus: Large ribosomal subunit protein bL32 (59 aa).

A disordered region spans residues 1-20 (MAVQQNKKSKSKKGMRRSHD). The span at 7–19 (KKSKSKKGMRRSH) shows a compositional bias: basic residues.

It belongs to the bacterial ribosomal protein bL32 family.

The protein is Large ribosomal subunit protein bL32 of Nitratidesulfovibrio vulgaris (strain DSM 19637 / Miyazaki F) (Desulfovibrio vulgaris).